The following is a 315-amino-acid chain: Homoserine kinase (315 aa).

Residue Pro97–Thr107 coordinates ATP.

This sequence belongs to the GHMP kinase family. Homoserine kinase subfamily.

The protein resides in the cytoplasm. It carries out the reaction L-homoserine + ATP = O-phospho-L-homoserine + ADP + H(+). It participates in amino-acid biosynthesis; L-threonine biosynthesis; L-threonine from L-aspartate: step 4/5. Its function is as follows. Catalyzes the ATP-dependent phosphorylation of L-homoserine to L-homoserine phosphate. In Synechococcus sp. (strain CC9605), this protein is Homoserine kinase.